A 559-amino-acid polypeptide reads, in one-letter code: 5-epiaristolochene synthase (559 aa).

Residues D312, D316, D455, T459, and E463 each coordinate Mg(2+). Residues 312–316 (DDTYD) carry the DDXXD motif motif.

This sequence belongs to the terpene synthase family. In terms of assembly, monomer. Mg(2+) serves as cofactor. In terms of tissue distribution, expressed only in treated leaves an not detected in control leaves.

The protein localises to the cytoplasm. The enzyme catalyses (2E,6E)-farnesyl diphosphate = (+)-5-epi-aristolochene + diphosphate. It participates in secondary metabolite biosynthesis; terpenoid biosynthesis. Functionally, catalyzes the cyclization of trans,trans-farnesyl diphosphate (FPP) to the bicyclic intermediate 5-epi-aristolochene, initial step in the conversion of FPP to the sesquiterpenoid antifungal phytoalexin capsidiol. Produces germacrene A as an enzyme-bound intermediate that is not released by the enzyme, but is further cyclized to produce the bicyclic 5-epi-aristolochene. This is 5-epiaristolochene synthase (EAS) from Capsicum annuum (Capsicum pepper).